The following is a 512-amino-acid chain: Cytochrome P450 26B1 (512 aa).

Residue Cys441 participates in heme binding.

Belongs to the cytochrome P450 family. The cofactor is heme.

It localises to the endoplasmic reticulum membrane. The protein resides in the microsome membrane. It carries out the reaction all-trans-retinoate + reduced [NADPH--hemoprotein reductase] + O2 = all-trans-4-hydroxyretinoate + oxidized [NADPH--hemoprotein reductase] + H2O + H(+). The enzyme catalyses all-trans-retinoate + reduced [NADPH--hemoprotein reductase] + O2 = all-trans-18-hydroxyretinoate + oxidized [NADPH--hemoprotein reductase] + H2O + H(+). Functionally, a cytochrome P450 monooxygenase involved in the metabolism of retinoates (RAs), the active metabolites of vitamin A, and critical signaling molecules in animals. RAs exist as at least four different isomers: all-trans-RA (atRA), 9-cis-RA, 13-cis-RA, and 9,13-dicis-RA, where atRA is considered to be the biologically active isomer, although 9-cis-RA and 13-cis-RA also have activity. Catalyzes the hydroxylation of atRA primarily at C-4 and C-18, thereby contributing to the regulation of atRA homeostasis and signaling. Hydroxylation of atRA limits its biological activity and initiates a degradative process leading to its eventual elimination. Involved in the convertion of atRA to all-trans-4-oxo-RA. Can oxidize all-trans-13,14-dihydroretinoate (DRA) to metabolites which could include all-trans-4-oxo-DRA, all-trans-4-hydroxy-DRA, all-trans-5,8-epoxy-DRA, and all-trans-18-hydroxy-DRA. Shows preference for the following substrates: atRA &gt; 9-cis-RA &gt; 13-cis-RA. Plays a central role in germ cell development: acts by degrading RAs in the developing testis, preventing STRA8 expression, thereby leading to delay of meiosis. Required for the maintenance of the undifferentiated state of male germ cells during embryonic development in Sertoli cells, inducing arrest in G0 phase of the cell cycle and preventing meiotic entry. Plays a role in skeletal development, both at the level of patterning and in the ossification of bone and the establishment of some synovial joints. Essential for postnatal survival. Its function is as follows. Also has a significant activity in oxidation of tazarotenic acid and may therefore metabolize that xenobiotic in vivo. The sequence is that of Cytochrome P450 26B1 (Cyp26b1) from Mus musculus (Mouse).